The sequence spans 377 residues: EPS I polysaccharide export outer membrane protein EpsA (377 aa).

The N-terminal stretch at 1-23 (MFVSIPSIRKTVMSLCAVPLMAA) is a signal peptide. Cysteine 24 is lipidated: N-palmitoyl cysteine. Cysteine 24 is lipidated: S-diacylglycerol cysteine.

The protein belongs to the BexD/CtrA/VexA family.

The protein localises to the cell outer membrane. Functionally, probably involved in polymerization and/or export of exopolysaccharide EPS I which functions as a virulence factor. The sequence is that of EPS I polysaccharide export outer membrane protein EpsA (epsA) from Ralstonia solanacearum (Pseudomonas solanacearum).